Here is a 1545-residue protein sequence, read N- to C-terminus: ATP-binding cassette sub-family C member 2 (1545 aa).

Residues 1–27 are Extracellular-facing; that stretch reads MLEKFCNSTFWNSSFLDSPEADLPLCF. Asn-7 and Asn-12 each carry an N-linked (GlcNAc...) asparagine glycan. Residues 28–48 traverse the membrane as a helical segment; it reads EQTVLVWIPLGYLWLLAPWQL. Residues 49–68 lie on the Cytoplasmic side of the membrane; it reads LHVYKSRTKRSSTTKLYLAK. The helical transmembrane segment at 69 to 89 threads the bilayer; the sequence is QVFVGFLLILAAIELALVLTE. Residues 90 to 93 lie on the Extracellular side of the membrane; sequence DSGQ. Residues 94–114 traverse the membrane as a helical segment; it reads ATVPAVRYTNPSLYLGTWLLV. Topologically, residues 115–126 are cytoplasmic; sequence LLIQYSRQWCVQ. Residues 127 to 147 traverse the membrane as a helical segment; it reads KNSWFLSLFWILSILCGTFQF. At 148–165 the chain is on the extracellular side; that stretch reads QTLIRTLLQGDNSNLAYS. The helical transmembrane segment at 166–186 threads the bilayer; that stretch reads CLFFISYGFQILILIFSAFSE. Over 187-313 the chain is Cytoplasmic; that stretch reads NNESSNNPSS…DVPKSWLMKA (127 aa). The interval 253-284 is disordered; it reads ARRALQRRQEKSSQQNSGARLPGLNKNQSQSQ. Phosphoserine occurs at positions 281 and 283. Residues 314–334 form a helical membrane-spanning segment; it reads LFKTFYMVLLKSFLLKLVNDI. The 284-residue stretch at 322 to 605 folds into the ABC transmembrane type-1 1 domain; it reads LLKSFLLKLV…LPMMISSMLQ (284 aa). The Extracellular segment spans residues 335–360; it reads FTFVSPQLLKLLISFASDRDTYLWIG. A helical transmembrane segment spans residues 361 to 381; sequence YLCAILLFTAALIQSFCLQCY. Residues 382 to 437 are Cytoplasmic-facing; that stretch reads FQLCFKLGVKVRTAIMASVYKKALTLSNLARKEYTVGETVNLMSVDAQKLMDVTNF. A helical transmembrane segment spans residues 438-458; the sequence is MHMLWSSVLQIVLSIFFLWRE. At 459–461 the chain is on the extracellular side; it reads LGP. Residues 462–482 form a helical membrane-spanning segment; it reads SVLAGVGVMVLVIPINAILST. Over 483 to 544 the chain is Cytoplasmic; the sequence is KSKTIQVKNM…NLLAFSQLQC (62 aa). A helical membrane pass occupies residues 545–565; it reads VVIFVFQLTPVLVSVVTFSVY. At 566–587 the chain is on the extracellular side; sequence VLVDSNNILDAQKAFTSITLFN. The chain crosses the membrane as a helical span at residues 588 to 608; the sequence is ILRFPLSMLPMMISSMLQASV. Topologically, residues 609–971 are cytoplasmic; that stretch reads STERLEKYLG…VKFSIYLEYL (363 aa). In terms of domain architecture, ABC transporter 1 spans 637–861; that stretch reads MQFSEASFTW…KGEFAKNLKT (225 aa). 671-678 provides a ligand contact to ATP; that stretch reads GPVGSGKS. Residues Ser-878, Ser-926, Ser-930, and Ser-938 each carry the phosphoserine modification. Residues 972–992 traverse the membrane as a helical segment; that stretch reads QAIGLFSIFFIILAFVMNSVA. Residues 979-1264 enclose the ABC transmembrane type-1 2 domain; it reads IFFIILAFVM…LVRMTSEIET (286 aa). Over 993 to 1033 the chain is Extracellular; sequence FIGSNLWLSAWTSDSKIFNSTDYPASQRDMRVGVYGALGLA. Asn-1011 carries an N-linked (GlcNAc...) asparagine glycan. Residues 1034 to 1054 form a helical membrane-spanning segment; sequence QGIFVFIAHFWSAFGFVHASN. The Cytoplasmic segment spans residues 1055–1097; sequence ILHKQLLNNILRAPMRFFDTTPTGRIVNRFAGDISTVDDTLPQ. The chain crosses the membrane as a helical span at residues 1098 to 1118; it reads SLRSWITCFLGIISTLVMICM. Ala-1119 is a topological domain (extracellular). The chain crosses the membrane as a helical span at residues 1120-1140; sequence TPVFTIIVIPLGIIYVSVQMF. Over 1141-1211 the chain is Cytoplasmic; that stretch reads YVSTSRQLRR…TSNRWLAIRL (71 aa). A helical membrane pass occupies residues 1212 to 1232; that stretch reads ELVGNLTVFFSALMMVIYRDT. Topologically, residues 1233 to 1234 are extracellular; sequence LS. The chain crosses the membrane as a helical span at residues 1235-1255; that stretch reads GDTVGFVLSNALNITQTLNWL. The Cytoplasmic portion of the chain corresponds to 1256–1545; it reads VRMTSEIETN…GIENVNSTKF (290 aa). The ABC transporter 2 domain occupies 1300–1534; the sequence is IQFNNYQVRY…PGPFYFMAKE (235 aa). Residue 1334–1341 coordinates ATP; the sequence is GRTGAGKS. At Ser-1438 the chain carries Phosphoserine.

The protein belongs to the ABC transporter superfamily. ABCC family. Conjugate transporter (TC 3.A.1.208) subfamily. Expressed by polarized cells in liver, kidney and intestine. The highest expression is found in liver. Expressed in small intestine.

The protein localises to the apical cell membrane. The enzyme catalyses ATP + H2O + xenobioticSide 1 = ADP + phosphate + xenobioticSide 2.. It catalyses the reaction an S-substituted glutathione(in) + ATP + H2O = an S-substituted glutathione(out) + ADP + phosphate + H(+). It carries out the reaction taurolithocholate 3-sulfate(in) + ATP + H2O = taurolithocholate 3-sulfate(out) + ADP + phosphate + H(+). The catalysed reaction is leukotriene C4(in) + ATP + H2O = leukotriene C4(out) + ADP + phosphate + H(+). The enzyme catalyses 17beta-estradiol 17-O-(beta-D-glucuronate)(in) + ATP + H2O = 17beta-estradiol 17-O-(beta-D-glucuronate)(out) + ADP + phosphate + H(+). It catalyses the reaction (4Z,15Z)-bilirubin IXalpha C8-beta-D-glucuronoside(in) + ATP + H2O = (4Z,15Z)-bilirubin IXalpha C8-beta-D-glucuronoside(out) + ADP + phosphate + H(+). It carries out the reaction (4Z,15Z)-bilirubin IXalpha C8,C12-beta-D-bisglucuronoside(in) + ATP + H2O = (4Z,15Z)-bilirubin IXalpha C8,C12-beta-D-bisglucuronoside(out) + ADP + phosphate + H(+). Its function is as follows. ATP-dependent transporter of the ATP-binding cassette (ABC) family that binds and hydrolyzes ATP to enable active transport of various substrates including many drugs, toxicants and endogenous compound across cell membranes. Transports a wide variety of conjugated organic anions such as sulfate-, glucuronide- and glutathione (GSH)-conjugates of endo- and xenobiotics substrates. Mediates hepatobiliary excretion of mono- and bis-glucuronidated bilirubin molecules and therefore play an important role in bilirubin detoxification. Also mediates hepatobiliary excretion of others glucuronide conjugates such as 17beta-estradiol 17-glucosiduronic acid and leukotriene C4. Transports sulfated bile salt such as taurolithocholate sulfate. Transports various anticancer drugs, such as anthracycline, vinca alkaloid and methotrexate and HIV-drugs such as protease inhibitors. Confers resistance to several anti-cancer drugs including cisplatin, doxorubicin, epirubicin, methotrexate, etoposide and vincristine. This chain is ATP-binding cassette sub-family C member 2, found in Homo sapiens (Human).